The chain runs to 267 residues: Matrilysin (267 aa).

Residues 1–17 form the signal peptide; the sequence is MRLTVLCAVCLLPGSLA. Positions 18–94 are cleaved as a propeptide — activation peptide; sequence LPLPQEAGGM…PRCGVPDVAE (77 aa). Residues 85-92 carry the Cysteine switch motif; that stretch reads PRCGVPDV. A Zn(2+)-binding site is contributed by Cys-87. A Ca(2+)-binding site is contributed by Asp-153. Residues His-163 and Asp-165 each contribute to the Zn(2+) site. The Ca(2+) site is built by Asp-170, Gly-171, Gly-173, and Thr-175. His-178 is a binding site for Zn(2+). 3 residues coordinate Ca(2+): Gly-185, Gly-187, and Asp-189. Residue His-191 coordinates Zn(2+). 2 residues coordinate Ca(2+): Asp-193 and Glu-196. Residue His-214 coordinates Zn(2+). Residue Glu-215 is part of the active site. Zn(2+) contacts are provided by His-218 and His-224.

Belongs to the peptidase M10A family. It depends on Ca(2+) as a cofactor. Zn(2+) is required as a cofactor.

The protein resides in the secreted. The protein localises to the extracellular space. Its subcellular location is the extracellular matrix. The enzyme catalyses Cleavage of 14-Ala-|-Leu-15 and 16-Tyr-|-Leu-17 in B chain of insulin. No action on collagen types I, II, IV, V. Cleaves gelatin chain alpha2(I) &gt; alpha1(I).. Its function is as follows. Degrades casein, gelatins of types I, III, IV, and V, and fibronectin. Activates procollagenase. This is Matrilysin (MMP7) from Homo sapiens (Human).